A 90-amino-acid chain; its full sequence is Interferon alpha-inducible protein 27-like protein 2A (90 aa).

The first 24 residues, 1 to 24, serve as a signal peptide directing secretion; it reads MLGTLFGSAIGGALAVAGAPVALA. 2 consecutive transmembrane segments (helical) span residues 28 to 48 and 67 to 89; these read FTGT…AAAI and GVLG…VGAL.

This sequence belongs to the IFI6/IFI27 family. Homodimer. Interacts with SKP2. Interacts with NR4A1. May interact with BCL2.

Its subcellular location is the nucleus inner membrane. Functionally, may be involved in the interferon-induced negative regulation of the transcriptional activity of NR4A1, NR4A2 and NR4A3 through the enhancement of XPO1-mediated nuclear export of these nuclear receptors. Through the regulation of NR4A1 transcriptional activity, may play a role in the vascular response to injury. The polypeptide is Interferon alpha-inducible protein 27-like protein 2A (Mus musculus (Mouse)).